The sequence spans 91 residues: Putative transmembrane protein encoded by LINC00862 (91 aa).

The chain crosses the membrane as a helical span at residues 49-69 (IMALILMPSLHCFGNILILLF).

It is found in the membrane. This chain is Putative transmembrane protein encoded by LINC00862 (LINC00862), found in Homo sapiens (Human).